A 350-amino-acid chain; its full sequence is Ornithine cyclodeaminase (350 aa).

Residues Arg45 and Lys69 each contribute to the L-ornithine site. NAD(+)-binding positions include Thr84, Arg112, 139–140, Asp161, Thr202, 225–228, Lys232, and Ser293; these read AQ and VGGD. Position 112 (Arg112) interacts with L-ornithine. Residue Asp228 participates in L-ornithine binding. Residue Asp228 is the Proton donor/acceptor of the active site. Val294 is an L-ornithine binding site. Lys331 serves as a coordination point for NAD(+).

This sequence belongs to the ornithine cyclodeaminase/mu-crystallin family. As to quaternary structure, homodimer. It depends on NAD(+) as a cofactor.

The enzyme catalyses L-ornithine = L-proline + NH4(+). It functions in the pathway amino-acid biosynthesis; L-proline biosynthesis; L-proline from L-ornithine: step 1/1. In terms of biological role, catalyzes the conversion of L-ornithine into L-proline with release of ammonia. Is likely involved in the L-ornithine degradation pathway that allows P.putida to utilize this compound as sole carbon and nitrogen source. The protein is Ornithine cyclodeaminase of Pseudomonas putida (strain ATCC 47054 / DSM 6125 / CFBP 8728 / NCIMB 11950 / KT2440).